The following is a 190-amino-acid chain: A-type ATP synthase subunit E (190 aa).

This sequence belongs to the V-ATPase E subunit family. Has multiple subunits with at least A(3), B(3), C, D, E, F, H, I and proteolipid K(x).

The protein localises to the cell membrane. Functionally, component of the A-type ATP synthase that produces ATP from ADP in the presence of a proton gradient across the membrane. This is A-type ATP synthase subunit E from Pyrobaculum islandicum (strain DSM 4184 / JCM 9189 / GEO3).